A 559-amino-acid chain; its full sequence is Germacrene A synthase (559 aa).

Residues aspartate 312, aspartate 316, aspartate 456, threonine 460, and glutamate 464 each coordinate Mg(2+). The DDXXD motif motif lies at 312–316 (DDTYD).

It belongs to the terpene synthase family. In terms of assembly, monomer. Mg(2+) serves as cofactor. As to expression, expressed in glandular trichomes of all aerial tissues, with highest levels in tissues accumulating parthenolide (e.g. flowers and, to some extent, leaves).

It carries out the reaction (2E,6E)-farnesyl diphosphate = (+)-(R)-germacrene A + diphosphate. It functions in the pathway secondary metabolite biosynthesis; terpenoid biosynthesis. Its function is as follows. Sesquiterpene synthase involved in germacrene A biosynthesis. Germacrene A is a precursor of several sesquiterpene lactones. This is Germacrene A synthase from Tanacetum parthenium (Feverfew).